The sequence spans 112 residues: MKKFLFLLLACAAVAFAAETNAPVEQEAINVWIKAFSVLAAGLGLGVAALGGAIGMGNTAAATIAGTARNPGLGPKLMTTMFIALAMIEAQVIYALVIALIALYANPFIVLQ.

The next 2 helical transmembrane spans lie at 36–56 (FSVLAAGLGLGVAALGGAIGM) and 81–101 (MFIALAMIEAQVIYALVIALI).

This sequence belongs to the ATPase C chain family. F-type ATPases have 2 components, F(1) - the catalytic core - and F(0) - the membrane proton channel. F(1) has five subunits: alpha(3), beta(3), gamma(1), delta(1), epsilon(1). F(0) has three main subunits: a(1), b(2) and c(10-14). The alpha and beta chains form an alternating ring which encloses part of the gamma chain. F(1) is attached to F(0) by a central stalk formed by the gamma and epsilon chains, while a peripheral stalk is formed by the delta and b chains.

The protein resides in the cell inner membrane. F(1)F(0) ATP synthase produces ATP from ADP in the presence of a proton or sodium gradient. F-type ATPases consist of two structural domains, F(1) containing the extramembraneous catalytic core and F(0) containing the membrane proton channel, linked together by a central stalk and a peripheral stalk. During catalysis, ATP synthesis in the catalytic domain of F(1) is coupled via a rotary mechanism of the central stalk subunits to proton translocation. Its function is as follows. Key component of the F(0) channel; it plays a direct role in translocation across the membrane. A homomeric c-ring of between 10-14 subunits forms the central stalk rotor element with the F(1) delta and epsilon subunits. The polypeptide is ATP synthase subunit c (Campylobacter jejuni subsp. doylei (strain ATCC BAA-1458 / RM4099 / 269.97)).